The primary structure comprises 120 residues: Cu-Zn superoxide dismutase-like protein OPG175 (120 aa).

Cysteine 52 and cysteine 102 are disulfide-bonded.

The protein belongs to the Cu-Zn superoxide dismutase family.

The protein resides in the virion. The protein localises to the host cytoplasm. Functionally, superoxide dismutase-like protein with no enzymatic activity. This Vaccinia virus (strain Tashkent) (VACV) protein is Cu-Zn superoxide dismutase-like protein OPG175 (OPG175).